Consider the following 128-residue polypeptide: 2-iminobutanoate/2-iminopropanoate deaminase (128 aa).

The protein belongs to the RutC family.

The protein localises to the cytoplasm. It catalyses the reaction 2-iminobutanoate + H2O = 2-oxobutanoate + NH4(+). It carries out the reaction 2-iminopropanoate + H2O = pyruvate + NH4(+). Functionally, catalyzes the hydrolytic deamination of enamine/imine intermediates that form during the course of normal metabolism. May facilitate the release of ammonia from these potentially toxic reactive metabolites, reducing their impact on cellular components. It may act on enamine/imine intermediates formed by several types of pyridoxal-5'-phosphate-dependent dehydratases including L-threonine dehydratase. Preferentially digests Leu and Met in cooperation with L-amino acid oxidase, but digests Phe poorly. In Dermatophagoides farinae (American house dust mite), this protein is 2-iminobutanoate/2-iminopropanoate deaminase.